A 1002-amino-acid chain; its full sequence is BTB/POZ domain-containing protein At1g04390 (1002 aa).

2 BTB domains span residues 680-758 (SDMR…EVES) and 808-889 (SDVI…PKPP).

The protein operates within protein modification; protein ubiquitination. Its function is as follows. May act as a substrate-specific adapter of an E3 ubiquitin-protein ligase complex (CUL3-RBX1-BTB) which mediates the ubiquitination and subsequent proteasomal degradation of target proteins. The sequence is that of BTB/POZ domain-containing protein At1g04390 from Arabidopsis thaliana (Mouse-ear cress).